Consider the following 412-residue polypeptide: MERIPSAQPPPTCLPKAPGLEPGDLSGMDFAHMYQVYKSRRGIKRSEDSKETYKLPHRLIEKKRRDRINECIAQLKDLLPEHLKLTTLGHLEKAVVLELTLKHVKALTNLIDQQQQKIIALQSGLQAGDLSGRNVEAGQEMFCSGFQTCAREVLQYLAKHENTRDLKSSQLVTHLHRVVSELLQGGTSRKPSDPAPKAMDFKEKPSSLAKGSEGPGKNCVPVIQRTFAHSSGEQSGSDTDTDSGYGGESEKSELRVEQPYFKSDHGRRFTMGERISAIKQESEEPPMKKSRMQLSDDEGPFTSTDLISSPFLGPHPHQPPFCLPFYLIPPSATAYLPMLEKCWYPTSVPVLYQGLNASAAALSSFMNPDKISAPLLMPQRLPSPLPTHPAIDSSALLQALKQIPPLNLETKD.

The segment at 1 to 21 (MERIPSAQPPPTCLPKAPGLE) is disordered. Positions 1-139 (MERIPSAQPP…LSGRNVEAGQ (139 aa)) are essential for interaction with BMAL1, E-box binding and repressor activity against the CLOCK-BMAL1 heterodimer. The 56-residue stretch at 52-107 (TYKLPHRLIEKKRRDRINECIAQLKDLLPEHLKLTTLGHLEKAVVLELTLKHVKAL) folds into the bHLH domain. The necessary for interaction with RXRA and repressor activity against RXRA stretch occupies residues 75–79 (LKDLL). The Orange domain maps to 142–175 (FCSGFQTCAREVLQYLAKHENTRDLKSSQLVTHL). Residue Lys159 forms a Glycyl lysine isopeptide (Lys-Gly) (interchain with G-Cter in SUMO1, SUMO2 and SUMO3) linkage. A Glycyl lysine isopeptide (Lys-Gly) (interchain with G-Cter in SUMO2) cross-link involves residue Lys167. Disordered regions lie at residues 182-256 (LLQG…ELRV) and 279-298 (KQES…SDDE). Position 235 is a phosphoserine (Ser235). A Glycyl lysine isopeptide (Lys-Gly) (interchain with G-Cter in SUMO1); alternate cross-link involves residue Lys279. Lys279 participates in a covalent cross-link: Glycyl lysine isopeptide (Lys-Gly) (interchain with G-Cter in SUMO1, SUMO2 and SUMO3); alternate. Lys279 is covalently cross-linked (Glycyl lysine isopeptide (Lys-Gly) (interchain with G-Cter in SUMO2); alternate). Lys288 participates in a covalent cross-link: Glycyl lysine isopeptide (Lys-Gly) (interchain with G-Cter in SUMO2). Residue Ser383 is modified to Phosphoserine.

As to quaternary structure, homodimer. Heterodimer with BHLHE41/DEC2. Interacts with TCF3/E47. Interacts with ubiquitin-conjugating enzyme UBE2I/UBC9. Interacts with HDAC1, SUMO1, RXRA and BMAL1. Ubiquitinated; which may lead to proteasomal degradation. Post-translationally, sumoylation inhibits its ubiquitination and promotes its negative regulation of the CLOCK-BMAL1 heterodimer transcriptional activator activity.

The protein localises to the cytoplasm. Its subcellular location is the nucleus. Its function is as follows. Transcriptional repressor involved in the regulation of the circadian rhythm by negatively regulating the activity of the clock genes and clock-controlled genes. Acts as the negative limb of a novel autoregulatory feedback loop (DEC loop) which differs from the one formed by the PER and CRY transcriptional repressors (PER/CRY loop). Both these loops are interlocked as it represses the expression of PER1/2 and in turn is repressed by PER1/2 and CRY1/2. Represses the activity of the circadian transcriptional activator: CLOCK-BMAL1|BMAL2 heterodimer by competing for the binding to E-box elements (5'-CACGTG-3') found within the promoters of its target genes. Negatively regulates its own expression and the expression of DBP and BHLHE41/DEC2. Acts as a corepressor of RXR and the RXR-LXR heterodimers and represses the ligand-induced RXRA and NR1H3/LXRA transactivation activity. May be involved in the regulation of chondrocyte differentiation via the cAMP pathway. Represses the transcription of NR0B2 and attentuates the transactivation of NR0B2 by the CLOCK-BMAL1 complex. Drives the circadian rhythm of blood pressure through transcriptional repression of ATP1B1 in the cardiovascular system. This Bos taurus (Bovine) protein is Class E basic helix-loop-helix protein 40 (BHLHE40).